A 509-amino-acid polypeptide reads, in one-letter code: ATP synthase subunit alpha (509 aa).

Gly169–Thr176 provides a ligand contact to ATP.

This sequence belongs to the ATPase alpha/beta chains family. In terms of assembly, F-type ATPases have 2 components, CF(1) - the catalytic core - and CF(0) - the membrane proton channel. CF(1) has five subunits: alpha(3), beta(3), gamma(1), delta(1), epsilon(1). CF(0) has three main subunits: a(1), b(2) and c(9-12). The alpha and beta chains form an alternating ring which encloses part of the gamma chain. CF(1) is attached to CF(0) by a central stalk formed by the gamma and epsilon chains, while a peripheral stalk is formed by the delta and b chains.

It is found in the cell inner membrane. It carries out the reaction ATP + H2O + 4 H(+)(in) = ADP + phosphate + 5 H(+)(out). In terms of biological role, produces ATP from ADP in the presence of a proton gradient across the membrane. The alpha chain is a regulatory subunit. The chain is ATP synthase subunit alpha from Brucella suis biovar 1 (strain 1330).